The chain runs to 294 residues: Glycine--tRNA ligase alpha subunit (294 aa).

Belongs to the class-II aminoacyl-tRNA synthetase family. As to quaternary structure, tetramer of two alpha and two beta subunits.

Its subcellular location is the cytoplasm. The catalysed reaction is tRNA(Gly) + glycine + ATP = glycyl-tRNA(Gly) + AMP + diphosphate. The polypeptide is Glycine--tRNA ligase alpha subunit (Trichormus variabilis (strain ATCC 29413 / PCC 7937) (Anabaena variabilis)).